We begin with the raw amino-acid sequence, 354 residues long: Peptide chain release factor 1 (354 aa).

Gln-230 carries the N5-methylglutamine modification.

Belongs to the prokaryotic/mitochondrial release factor family. Post-translationally, methylated by PrmC. Methylation increases the termination efficiency of RF1.

It localises to the cytoplasm. Functionally, peptide chain release factor 1 directs the termination of translation in response to the peptide chain termination codons UAG and UAA. The protein is Peptide chain release factor 1 of Rhodospirillum rubrum (strain ATCC 11170 / ATH 1.1.1 / DSM 467 / LMG 4362 / NCIMB 8255 / S1).